Here is a 207-residue protein sequence, read N- to C-terminus: Protein Nef (207 aa).

G2 carries the N-myristoyl glycine; by host lipid modification. S6 is modified (phosphoserine; by host). Residues 62–66 (EESEE) form an acidic; interacts with host PACS1 and PACS2; stabilizes the interaction of NEF/MHC-I with host AP1M1; necessary for MHC-I internalization region. The interval 70-79 (PVRPQVPLRP) is SH3-binding; interaction with Src family tyrosine kinases. The short motif at 73-76 (PQVP) is the PxxP; stabilizes the interaction of NEF/MHC-I with host AP1M1; necessary for MHC-I internalization element. The segment at 109–125 (EILDLWVYNTQGIFPDW) is mediates dimerization, Nef-PTE1 interaction. Positions 149–181 (VDPQEVEEATEREDNCLLHPMCQQGMEDPERQV) are binding to ATP6V1H. The Dileucine internalization motif; necessary for CD4 internalization motif lies at 165-166 (LL). Positions 175–176 (ED) match the Diacidic; necessary for CD4 internalization motif.

This sequence belongs to the lentivirus primate group Nef protein family. In terms of assembly, monomer; cytosolic form. Homodimer; membrane bound form. Interacts with Nef associated p21-activated kinase (PAK2); this interaction activates PAK2. Associates with the Nef-MHC-I-AP1 complex; this complex is required for MHC-I internalization. Interacts (via C-terminus) with host PI3-kinase. Interacts with host PACS1; this interaction seems to be weak. Interacts with host PACS2. Interacts with host LCK and MAPK3; these interactions inhibit the kinase activity of the latter. Interacts with host ATP6V1H; this interaction may play a role in CD4 endocytosis. Associates with the CD4-Nef-AP2 complex; this complex is required for CD4 internalization. Interacts with host AP2 subunit alpha and AP2 subunit sigma2. Interacts with TCR-zeta chain; this interaction up-regulates the Fas ligand (FasL) surface expression. Interacts with host HCK, LYN, and SRC; these interactions activate the Src family kinases. Interacts with MAP3K5; this interaction inhibits the Fas and TNFR-mediated death signals. Interacts with beta-COP and PTE1. Interacts with human RACK1; this increases Nef phosphorylation by PKC. Interacts with TP53; this interaction decreases the half-life of TP53, protecting the infected cell against p53-mediated apoptosis. In terms of processing, the virion-associated Nef proteins are cleaved by the viral protease to release the soluble C-terminal core protein. Nef is probably cleaved concomitantly with viral structural proteins on maturation of virus particles. Myristoylated. Post-translationally, phosphorylated on serine residues, probably by host PKCdelta and theta.

Its subcellular location is the host cell membrane. It is found in the virion. It localises to the secreted. The protein resides in the host Golgi apparatus membrane. Its function is as follows. Factor of infectivity and pathogenicity, required for optimal virus replication. Alters numerous pathways of T-lymphocyte function and down-regulates immunity surface molecules in order to evade host defense and increase viral infectivity. Alters the functionality of other immunity cells, like dendritic cells, monocytes/macrophages and NK cells. In infected CD4(+) T-lymphocytes, down-regulates the surface MHC-I, mature MHC-II, CD4, CD28, CCR5 and CXCR4 molecules. Mediates internalization and degradation of host CD4 through the interaction of with the cytoplasmic tail of CD4, the recruitment of AP-2 (clathrin adapter protein complex 2), internalization through clathrin coated pits, and subsequent transport to endosomes and lysosomes for degradation. Diverts host MHC-I molecules to the trans-Golgi network-associated endosomal compartments by an endocytic pathway to finally target them for degradation. MHC-I down-regulation may involve AP-1 (clathrin adapter protein complex 1) or possibly Src family kinase-ZAP70/Syk-PI3K cascade recruited by PACS2. In consequence infected cells are masked for immune recognition by cytotoxic T-lymphocytes. Decreasing the number of immune receptors also prevents reinfection by more HIV particles (superinfection). Down-regulates host SERINC3 and SERINC5 thereby excluding these proteins from the viral particles. Virion infectivity is drastically higher when SERINC3 or SERINC5 are excluded from the viral envelope, because these host antiviral proteins impair the membrane fusion event necessary for subsequent virion penetration. In terms of biological role, bypasses host T-cell signaling by inducing a transcriptional program nearly identical to that of anti-CD3 cell activation. Interaction with TCR-zeta chain up-regulates the Fas ligand (FasL). Increasing surface FasL molecules and decreasing surface MHC-I molecules on infected CD4(+) cells send attacking cytotoxic CD8+ T-lymphocytes into apoptosis. Functionally, plays a role in optimizing the host cell environment for viral replication without causing cell death by apoptosis. Protects the infected cells from apoptosis in order to keep them alive until the next virus generation is ready to strike. Inhibits the Fas and TNFR-mediated death signals by blocking MAP3K5/ASK1. Decreases the half-life of TP53, protecting the infected cell against p53-mediated apoptosis. Inhibits the apoptotic signals regulated by the Bcl-2 family proteins through the formation of a Nef/PI3-kinase/PAK2 complex that leads to activation of PAK2 and induces phosphorylation of host BAD. Its function is as follows. Extracellular Nef protein targets CD4(+) T-lymphocytes for apoptosis by interacting with CXCR4 surface receptors. This chain is Protein Nef, found in Human immunodeficiency virus type 1 group M subtype D (isolate NDK) (HIV-1).